Here is a 156-residue protein sequence, read N- to C-terminus: ATP synthase subunit b (156 aa).

The chain crosses the membrane as a helical span at residues 7–27 (LIGQLIAFALFVAFCMKFVWP).

It belongs to the ATPase B chain family. In terms of assembly, F-type ATPases have 2 components, F(1) - the catalytic core - and F(0) - the membrane proton channel. F(1) has five subunits: alpha(3), beta(3), gamma(1), delta(1), epsilon(1). F(0) has three main subunits: a(1), b(2) and c(10-14). The alpha and beta chains form an alternating ring which encloses part of the gamma chain. F(1) is attached to F(0) by a central stalk formed by the gamma and epsilon chains, while a peripheral stalk is formed by the delta and b chains.

Its subcellular location is the cell inner membrane. Functionally, f(1)F(0) ATP synthase produces ATP from ADP in the presence of a proton or sodium gradient. F-type ATPases consist of two structural domains, F(1) containing the extramembraneous catalytic core and F(0) containing the membrane proton channel, linked together by a central stalk and a peripheral stalk. During catalysis, ATP synthesis in the catalytic domain of F(1) is coupled via a rotary mechanism of the central stalk subunits to proton translocation. In terms of biological role, component of the F(0) channel, it forms part of the peripheral stalk, linking F(1) to F(0). In Actinobacillus pleuropneumoniae serotype 7 (strain AP76), this protein is ATP synthase subunit b.